Here is a 349-residue protein sequence, read N- to C-terminus: UDP-3-O-acylglucosamine N-acyltransferase (349 aa).

H248 serves as the catalytic Proton acceptor.

Belongs to the transferase hexapeptide repeat family. LpxD subfamily. Homotrimer.

It carries out the reaction a UDP-3-O-[(3R)-3-hydroxyacyl]-alpha-D-glucosamine + a (3R)-hydroxyacyl-[ACP] = a UDP-2-N,3-O-bis[(3R)-3-hydroxyacyl]-alpha-D-glucosamine + holo-[ACP] + H(+). The protein operates within bacterial outer membrane biogenesis; LPS lipid A biosynthesis. Functionally, catalyzes the N-acylation of UDP-3-O-acylglucosamine using 3-hydroxyacyl-ACP as the acyl donor. Is involved in the biosynthesis of lipid A, a phosphorylated glycolipid that anchors the lipopolysaccharide to the outer membrane of the cell. The polypeptide is UDP-3-O-acylglucosamine N-acyltransferase (Gloeothece citriformis (strain PCC 7424) (Cyanothece sp. (strain PCC 7424))).